Reading from the N-terminus, the 83-residue chain is Small ribosomal subunit protein bS16 (83 aa).

The protein belongs to the bacterial ribosomal protein bS16 family.

This is Small ribosomal subunit protein bS16 from Albidiferax ferrireducens (strain ATCC BAA-621 / DSM 15236 / T118) (Rhodoferax ferrireducens).